Consider the following 510-residue polypeptide: Aromatic-L-amino-acid decarboxylase (510 aa).

Polar residues predominate over residues 1 to 17 (MSHIPISNTIPPKQTDG). A disordered region spans residues 1 to 29 (MSHIPISNTIPPKQTDGNGKANISPDKLD). T117 provides a ligand contact to substrate. Residues A183, S184, H227, D305, and N334 each coordinate pyridoxal 5'-phosphate. H227 provides a ligand contact to substrate. K337 carries the post-translational modification N6-(pyridoxal phosphate)lysine. Residues 358–384 (NAFNVDPLYLKHDMQGSAPDYRHWQIP) are disordered.

Belongs to the group II decarboxylase family. In terms of assembly, homodimer. Pyridoxal 5'-phosphate is required as a cofactor.

It catalyses the reaction L-dopa + H(+) = dopamine + CO2. The catalysed reaction is 5-hydroxy-L-tryptophan + H(+) = serotonin + CO2. In terms of biological role, catalyzes the decarboxylation of L-3,4-dihydroxyphenylalanine (L-DOPA) to dopamine and L-5-hydroxytryptophan (5-HTP) to serotonin. Catalyzes the formation of serotonin more efficiently than dopamine. Displays no activity to tyrosine. Variation in the synthesis of bioamines may be a factor contributing to natural variation in life span. The polypeptide is Aromatic-L-amino-acid decarboxylase (Ddc) (Drosophila simulans (Fruit fly)).